We begin with the raw amino-acid sequence, 202 residues long: 7-methyl-GTP pyrophosphatase (202 aa).

Residue D70 is the Proton acceptor of the active site.

It belongs to the Maf family. YceF subfamily. The cofactor is a divalent metal cation.

It is found in the cytoplasm. It catalyses the reaction N(7)-methyl-GTP + H2O = N(7)-methyl-GMP + diphosphate + H(+). Its function is as follows. Nucleoside triphosphate pyrophosphatase that hydrolyzes 7-methyl-GTP (m(7)GTP). May have a dual role in cell division arrest and in preventing the incorporation of modified nucleotides into cellular nucleic acids. In Pseudoalteromonas translucida (strain TAC 125), this protein is 7-methyl-GTP pyrophosphatase.